The sequence spans 174 residues: FMN reductase (NADH) RutF (174 aa).

Belongs to the non-flavoprotein flavin reductase family. RutF subfamily.

The catalysed reaction is FMNH2 + NAD(+) = FMN + NADH + 2 H(+). In terms of biological role, catalyzes the reduction of FMN to FMNH2 which is used to reduce pyrimidine by RutA via the Rut pathway. This Stutzerimonas stutzeri (strain A1501) (Pseudomonas stutzeri) protein is FMN reductase (NADH) RutF.